We begin with the raw amino-acid sequence, 455 residues long: MAPQLLLCLILTFLWSLPEAESNVFLKSKVANRFLQRTKRSNSLFEEIRPGNIERECIEEKCSKEEAREVFEDNEKTETFWNVYVDGDQCSSNPCHYRGTCKDGIGSYTCTCLPNYEGKNCEKVLYQSCRVDNGNCWHFCKRVQSETQCSCAESYRLGVDGHSCVAEGDFSCGRNIKARNKREASLPDFVQSQKATLLKKSDNPSPDIRIVNGMDCKLGECPWQAVLINEKGEVFCGGTILSPIHVLTAAHCINQTKSVSVIVGEIDISRKETRRLLSVDKIYVHTKFVPPNYYYVHQNFDRVAYDYDIAIIRMKTPIQFSENVVPACLPTADFANEVLMKQDSGIVSGFGRIQFKQPTSNTLKVITVPYVDRHTCMLSSDFRITQNMFCAGYDTLPQDACQGDSGGPHITAYRDTHFITGIISWGEGCARKGKYGVYTKVSKFIPWIKKIMSLK.

The first 20 residues, 1–20 (MAPQLLLCLILTFLWSLPEA), serve as a signal peptide directing secretion. A propeptide spanning residues 21 to 40 (ESNVFLKSKVANRFLQRTKR) is cleaved from the precursor. Residues 41–86 (SNSLFEEIRPGNIERECIEEKCSKEEAREVFEDNEKTETFWNVYVD) enclose the Gla domain. Glutamate 46, glutamate 47, glutamate 54, glutamate 56, glutamate 59, glutamate 60, glutamate 65, glutamate 66, glutamate 69, glutamate 72, and glutamate 75 each carry 4-carboxyglutamate. Residues cysteine 57 and cysteine 62 are joined by a disulfide bond. The region spanning 86–122 (DGDQCSSNPCHYRGTCKDGIGSYTCTCLPNYEGKNCE) is the EGF-like 1; calcium-binding domain. 11 disulfides stabilise this stretch: cysteine 90–cysteine 101, cysteine 95–cysteine 110, cysteine 112–cysteine 121, cysteine 129–cysteine 140, cysteine 136–cysteine 149, cysteine 151–cysteine 164, cysteine 172–cysteine 328, cysteine 216–cysteine 221, cysteine 236–cysteine 252, cysteine 376–cysteine 390, and cysteine 401–cysteine 429. An O-linked (Hex...) serine glycan is attached at serine 92. The EGF-like 2 domain maps to 129–164 (CRVDNGNCWHFCKRVQSETQCSCAESYRLGVDGHSC). A propeptide spans 182–209 (REASLPDFVQSQKATLLKKSDNPSPDIR) (activation peptide). Residues 210-453 (IVNGMDCKLG…FIPWIKKIMS (244 aa)) form the Peptidase S1 domain. Histidine 251 functions as the Charge relay system in the catalytic mechanism. Asparagine 254 carries an N-linked (GlcNAc...) asparagine glycan. The active-site Charge relay system is the aspartate 308. Catalysis depends on serine 405, which acts as the Charge relay system.

Belongs to the peptidase S1 family. Snake venom subfamily. As to quaternary structure, heterodimer of a light chain and a heavy chain; disulfide-linked. In terms of processing, gamma-carboxyglutamate residues are formed by vitamin K dependent carboxylation. These residues are essential for the binding of calcium. Post-translationally, the O-linked saccharides at Ser-92 are a mixture of Xyl-Glc, and Glc along with smaller amounts of Xyl-GlcNAc, GlcNAc, Gal, GalNAc, Xyl-Gal, and Xyl-GalNAc, suggesting that the glycosyl transferases responsible for this modification are non-specific. The N-linked carbohydrate at Asn-254 (Asn-45 of the heavy chain) is a sialylated and diantennary oligosaccharide. Expressed by the venom gland.

The protein resides in the secreted. The enzyme catalyses Selective cleavage of Arg-|-Thr and then Arg-|-Ile bonds in prothrombin to form thrombin.. Its activity is regulated as follows. Activated by calcium and phospholipids. Its function is as follows. Snake prothrombin activator that attacks the hemostatic system of prey. This protein is functionally similar to blood coagulation factor Xa. Induces cyanosis and death in mice at 1 mg/kg body weight during blood clotting. The polypeptide is Venom prothrombin activator trocarin-D (Tropidechis carinatus (Australian rough-scaled snake)).